The sequence spans 214 residues: Adenylate kinase (214 aa).

An ATP-binding site is contributed by 11-16; the sequence is GTGKGT. The segment at 31-61 is NMP; the sequence is SSGDLFRFYAKEEKTALAEEIKSYINNGLYV. Residues Ser32, Arg37, 59–61, 87–90, and Gln94 contribute to the AMP site; these read LYV and GYPR. The tract at residues 124-163 is LID; sequence LRRSCPQCKRIYNINSVDFKPKVANLCDLCKVELIHRKDD. Arg125 serves as a coordination point for ATP. Zn(2+) is bound by residues Cys128 and Cys131. 134-135 provides a ligand contact to ATP; the sequence is IY. Cys150 and Cys153 together coordinate Zn(2+). Residues Arg160 and Arg171 each coordinate AMP. Lys199 provides a ligand contact to ATP.

This sequence belongs to the adenylate kinase family. Monomer.

Its subcellular location is the cytoplasm. It carries out the reaction AMP + ATP = 2 ADP. Its pathway is purine metabolism; AMP biosynthesis via salvage pathway; AMP from ADP: step 1/1. Catalyzes the reversible transfer of the terminal phosphate group between ATP and AMP. Plays an important role in cellular energy homeostasis and in adenine nucleotide metabolism. The sequence is that of Adenylate kinase from Mycoplasmoides gallisepticum (strain R(low / passage 15 / clone 2)) (Mycoplasma gallisepticum).